A 286-amino-acid chain; its full sequence is uncharacterized protein (286 aa).

Transmembrane regions (helical) follow at residues 201-221 and 231-251; these read VIYS…LCET and AIIL…YLMM.

It localises to the cell membrane. This is an uncharacterized protein from Methanocaldococcus jannaschii (strain ATCC 43067 / DSM 2661 / JAL-1 / JCM 10045 / NBRC 100440) (Methanococcus jannaschii).